We begin with the raw amino-acid sequence, 644 residues long: Keratin, type II cytoskeletal 1 (644 aa).

Residues 2 to 179 (SRQFSSRSGY…DPEIQKVKSR (178 aa)) are head. Arginine 12 carries the post-translational modification Omega-N-methylarginine. Phosphoserine is present on residues serine 18 and serine 21. The segment covering 22 to 38 (AGIINYQRRTTSSSTRR) has biased composition (low complexity). The disordered stretch occupies residues 22 to 47 (AGIINYQRRTTSSSTRRSGGGGGRFS). Arginine 45 bears the Omega-N-methylarginine mark. Residue serine 66 is modified to Phosphoserine. Omega-N-methylarginine is present on arginine 82. The segment at 180–215 (EREQIKSLNNQFASFIDKVRFLEQQNQVLQTKWELL) is coil 1A. Residues 180–493 (EREQIKSLNN…TLLEGEESRM (314 aa)) enclose the IF rod domain. The segment at 216-234 (QQVDTSTRTHNLEPYFESF) is linker 1. The coil 1B stretch occupies residues 235–326 (INNLRRRVDQ…ALYQAELSQM (92 aa)). An N6,N6-dimethyllysine modification is found at lysine 276. Residues 327 to 350 (QTQISETNVILSMDNNRSLDLDSI) form a linker 12 region. Serine 344 is modified (phosphoserine). The segment at 351-489 (IAEVKAQYED…ATYRTLLEGE (139 aa)) is coil 2. Disordered regions lie at residues 489–523 (EESRMSGECAPNVSVSVSTSHTTISGGGSRGGGGG) and 568–644 (SGGG…GVTR). The interval 490–644 (ESRMSGECAP…VSTTYSGVTR (155 aa)) is tail. Over residues 501-511 (VSVSVSTSHTT) the composition is skewed to low complexity. Gly residues-rich tracts occupy residues 513–523 (SGGGSRGGGGG) and 568–620 (SGGG…GSSS). Omega-N-methylarginine is present on residues arginine 518 and arginine 588. Residues 621–631 (GGVKSSGGSSS) are compositionally biased toward low complexity. Residues 632–644 (VKFVSTTYSGVTR) show a composition bias toward polar residues.

It belongs to the intermediate filament family. In terms of assembly, heterotetramer of two type I and two type II keratins. Heterodimer with KRT10. Two heterodimers of KRT1 and KRT10 form a heterotetramer. Forms a heterodimer with KRT14; the interaction is more abundant in the absence of KRT5. Interacts with PLEC isoform 1C, when in a heterodimer with KRT10. Interacts with ITGB1 in the presence of RACK1 and SRC, and with RACK1. Interacts with C1QBP; the association represents a cell surface kininogen receptor. Interacts with EPPK1; interaction is dependent of higher-order structure of intermediate filament. In terms of processing, undergoes deimination of some arginine residues (citrullination). The source of this protein is neonatal foreskin. The 67-kDa type II keratins are expressed in terminally differentiating epidermis.

The protein resides in the cell membrane. Its subcellular location is the cytoplasm. Its function is as follows. May regulate the activity of kinases such as PKC and SRC via binding to integrin beta-1 (ITB1) and the receptor of activated protein C kinase 1 (RACK1). In complex with C1QBP is a high affinity receptor for kininogen-1/HMWK. This chain is Keratin, type II cytoskeletal 1 (KRT1), found in Homo sapiens (Human).